Consider the following 197-residue polypeptide: uncharacterized protein (197 aa).

Residues 1–135 (MKTPWKFLAR…ERGKRANARV (135 aa)) are disordered. Polar residues predominate over residues 14-32 (RQPSGKTQESSAGNDTGSK). Over residues 83 to 96 (IHADEAQTTARDEA) the composition is skewed to basic and acidic residues. Residues 116-132 (SQRKPRIKRRERGKRAN) show a composition bias toward basic residues.

This sequence to Rhizobium NGR234A y4nF and y4aO.

This is an uncharacterized protein from Rhizobium meliloti (strain 1021) (Ensifer meliloti).